Consider the following 361-residue polypeptide: MSQPTLFIDRDGTLIDEPKTDFQIDSLEKLKLERNVIPALLKLKDHYRFVMVSNQDGLGTDSFPQENFDKPHNAMLEIFRSQGIEFDAILICPHKPEDNCDCRKPKIKLLKKYIDKKLFDPAHSFVIGDRATDVQLAENLGIQALQYHPEKLDWDLIVEKLLPKTTACERPPRYAEVVRTTKETDIKVQVWLDETGVNQISTGVGFFDHMLDQIATHGGFRMNVQCKGDLWIDEHHTVEDTALALGTALKQALGDKRGIQRFGFVLPMDECKAECTMDLSGRPYFKFKAKFKREKVGDFSTEMTEHFFQSIAYTLMATLHLKTQGDNDHHKIESLFKVFGRTLRQCIKVEGNELPSSKGVL.

The segment at 1 to 172 is histidinol-phosphatase; the sequence is MSQPTLFIDR…PKTTACERPP (172 aa). D9 serves as the catalytic Nucleophile. Mg(2+) contacts are provided by D9 and D11. Residue D11 is the Proton donor of the active site. Residues C92, H94, C100, and C102 each contribute to the Zn(2+) site. D129 lines the Mg(2+) pocket. The segment at 173 to 361 is imidazoleglycerol-phosphate dehydratase; it reads RYAEVVRTTK…NELPSSKGVL (189 aa).

The protein in the N-terminal section; belongs to the histidinol-phosphatase family. In the C-terminal section; belongs to the imidazoleglycerol-phosphate dehydratase family. Mg(2+) serves as cofactor. The cofactor is Zn(2+).

It is found in the cytoplasm. The enzyme catalyses D-erythro-1-(imidazol-4-yl)glycerol 3-phosphate = 3-(imidazol-4-yl)-2-oxopropyl phosphate + H2O. It catalyses the reaction L-histidinol phosphate + H2O = L-histidinol + phosphate. It functions in the pathway amino-acid biosynthesis; L-histidine biosynthesis; L-histidine from 5-phospho-alpha-D-ribose 1-diphosphate: step 6/9. It participates in amino-acid biosynthesis; L-histidine biosynthesis; L-histidine from 5-phospho-alpha-D-ribose 1-diphosphate: step 8/9. The sequence is that of Histidine biosynthesis bifunctional protein HisB from Actinobacillus pleuropneumoniae serotype 7 (strain AP76).